The following is a 73-amino-acid chain: Cell division protein ZapB (73 aa).

A coiled-coil region spans residues 3–66; it reads LELLSKLETK…SWNEKVTGLV (64 aa).

The protein belongs to the ZapB family. Homodimer. The ends of the coiled-coil dimer bind to each other, forming polymers. Interacts with FtsZ.

The protein resides in the cytoplasm. Functionally, non-essential, abundant cell division factor that is required for proper Z-ring formation. It is recruited early to the divisome by direct interaction with FtsZ, stimulating Z-ring assembly and thereby promoting cell division earlier in the cell cycle. Its recruitment to the Z-ring requires functional FtsA or ZipA. The polypeptide is Cell division protein ZapB (Shewanella baltica (strain OS223)).